Here is a 139-residue protein sequence, read N- to C-terminus: Large ribosomal subunit protein uL16 (139 aa).

The segment covering 1 to 19 (MLIPRKVKHRKQHHPKRSG) has biased composition (basic residues). A disordered region spans residues 1–22 (MLIPRKVKHRKQHHPKRSGVAK).

Belongs to the universal ribosomal protein uL16 family. Part of the 50S ribosomal subunit.

Its function is as follows. Binds 23S rRNA and is also seen to make contacts with the A and possibly P site tRNAs. This chain is Large ribosomal subunit protein uL16, found in Acidothermus cellulolyticus (strain ATCC 43068 / DSM 8971 / 11B).